Here is a 193-residue protein sequence, read N- to C-terminus: dTTP/UTP pyrophosphatase (193 aa).

Asp75 functions as the Proton acceptor in the catalytic mechanism.

Belongs to the Maf family. YhdE subfamily. Requires a divalent metal cation as cofactor.

Its subcellular location is the cytoplasm. The enzyme catalyses dTTP + H2O = dTMP + diphosphate + H(+). The catalysed reaction is UTP + H2O = UMP + diphosphate + H(+). Functionally, nucleoside triphosphate pyrophosphatase that hydrolyzes dTTP and UTP. May have a dual role in cell division arrest and in preventing the incorporation of modified nucleotides into cellular nucleic acids. The sequence is that of dTTP/UTP pyrophosphatase from Chlorobium luteolum (strain DSM 273 / BCRC 81028 / 2530) (Pelodictyon luteolum).